The following is a 625-amino-acid chain: Vicilin-like antimicrobial peptides 2-3 (625 aa).

Disordered stretches follow at residues Q120–E152 and R180–Y212. Basic and acidic residues predominate over residues R198–Y212. 2 consecutive Cupin type-1 domains span residues S230 to R369 and Y414 to E584. The tract at residues I594–Q614 is disordered. The segment covering Q601–Q614 has biased composition (low complexity).

It belongs to the 7S seed storage protein family.

It localises to the secreted. In terms of biological role, antimicrobial peptides 2b, 2c and 2d have antibacterial and antifungal activity against a range of species. The chain is Vicilin-like antimicrobial peptides 2-3 from Macadamia integrifolia (Macadamia nut).